We begin with the raw amino-acid sequence, 460 residues long: MTESTAKVQVIGGGLAGTEAAWQVAQAGIPVILHEMRPIRTSPAHHSQELAELVCSNSFGAMSSNRAAGLLHEELRRLNSIIIQTADKHAVPAGGALAVDRGVFSHQLTQTLQNHPLIELRRSEVQEIPSDGIVILATGPLTSPVLAEKLQQFTGMAYMSFFDAASPIIVGDSINRDIAFLASRYDKGEAAYLNCPLNPEQYLQFRDELCTAEQAELKEFERETAKFFEGCLPIEELAQRGEDTMRYGPLKPVGLFDARLGDFRDPENKEKRPYAVVQLRQEDKQGKLWNMVGFQTNLKWGEQKRVFRLIPGLENAEFVRMGVMHRNTFINSPQLLDPTLQFKSRPTLLAAGQLIGTEGYTAASAGGWLAGTNAARIALGLEPISLPSTTMMGALFEFISSASPKHFQPMPPNFGILPDLPVRIRNKRERYGKYRDRALADLNDCQTQLNNHQKNSVILV.

12–17 (GGGLAG) contacts FAD.

The protein belongs to the MnmG family. TrmFO subfamily. Requires FAD as cofactor.

The protein resides in the cytoplasm. The catalysed reaction is uridine(54) in tRNA + (6R)-5,10-methylene-5,6,7,8-tetrahydrofolate + NADH + H(+) = 5-methyluridine(54) in tRNA + (6S)-5,6,7,8-tetrahydrofolate + NAD(+). It catalyses the reaction uridine(54) in tRNA + (6R)-5,10-methylene-5,6,7,8-tetrahydrofolate + NADPH + H(+) = 5-methyluridine(54) in tRNA + (6S)-5,6,7,8-tetrahydrofolate + NADP(+). Its function is as follows. Catalyzes the folate-dependent formation of 5-methyl-uridine at position 54 (M-5-U54) in all tRNAs. The protein is Methylenetetrahydrofolate--tRNA-(uracil-5-)-methyltransferase TrmFO of Crocosphaera subtropica (strain ATCC 51142 / BH68) (Cyanothece sp. (strain ATCC 51142)).